A 165-amino-acid polypeptide reads, in one-letter code: Large ribosomal subunit protein uL11 (165 aa).

The protein belongs to the universal ribosomal protein uL11 family. Component of the large ribosomal subunit. Mature ribosomes consist of a small (40S) and a large (60S) subunit. The 40S subunit contains about 32 different proteins and 1 molecule of RNA (18S). The 60S subunit contains 45 different proteins and 3 molecules of RNA (25S, 5.8S and 5S).

It localises to the cytoplasm. In terms of biological role, component of the ribosome, a large ribonucleoprotein complex responsible for the synthesis of proteins in the cell. The small ribosomal subunit (SSU) binds messenger RNAs (mRNAs) and translates the encoded message by selecting cognate aminoacyl-transfer RNA (tRNA) molecules. The large subunit (LSU) contains the ribosomal catalytic site termed the peptidyl transferase center (PTC), which catalyzes the formation of peptide bonds, thereby polymerizing the amino acids delivered by tRNAs into a polypeptide chain. The nascent polypeptides leave the ribosome through a tunnel in the LSU and interact with protein factors that function in enzymatic processing, targeting, and the membrane insertion of nascent chains at the exit of the ribosomal tunnel. The protein is Large ribosomal subunit protein uL11 (RPL12) of Candida albicans (strain SC5314 / ATCC MYA-2876) (Yeast).